We begin with the raw amino-acid sequence, 471 residues long: Alpha-galactosidase 5 (471 aa).

An N-terminal signal peptide occupies residues 1 to 18; it reads MFAFYFLTACTTLKGVFG. Cysteine 42 and cysteine 74 are oxidised to a cystine. The substrate site is built by aspartate 72 and aspartate 73. An N-linked (GlcNAc...) asparagine glycan is attached at asparagine 105. Residues cysteine 121 and cysteine 151 are joined by a disulfide bond. Residue lysine 147 participates in substrate binding. Aspartate 149 functions as the Nucleophile in the catalytic mechanism. Asparagine 175 carries N-linked (GlcNAc...) asparagine glycosylation. Arginine 205 is a binding site for substrate. Aspartate 209 serves as the catalytic Proton donor. 2 disulfides stabilise this stretch: cysteine 221-cysteine 237 and cysteine 223-cysteine 230. Substrate is bound at residue glutamine 251. N-linked (GlcNAc...) asparagine glycosylation is found at asparagine 270, asparagine 370, asparagine 403, asparagine 422, asparagine 435, and asparagine 454.

Belongs to the glycosyl hydrolase 27 family. As to quaternary structure, homotetramer.

It is found in the secreted. The enzyme catalyses Hydrolysis of terminal, non-reducing alpha-D-galactose residues in alpha-D-galactosides, including galactose oligosaccharides, galactomannans and galactolipids.. The polypeptide is Alpha-galactosidase 5 (MEL5) (Saccharomyces cerevisiae (Baker's yeast)).